The chain runs to 3953 residues: Zinc finger protein 469 (3953 aa).

14 disordered regions span residues Met-1–Gln-274, Trp-313–Asn-465, Glu-512–Pro-672, Gly-763–Ala-784, Ala-869–Leu-1383, Pro-1400–Val-1461, Leu-1575–Arg-1610, Ser-1703–Ser-1864, Val-1884–Gly-1947, Lys-1991–Thr-2030, Leu-2070–Pro-2700, Ala-2716–Ser-2915, Glu-3001–Thr-3036, and Gly-3072–Gly-3110. Polar residues predominate over residues Pro-187–Ser-198. Composition is skewed to pro residues over residues Thr-202 to Pro-211 and Tyr-324 to Leu-335. The segment covering Ser-603–Ser-623 has biased composition (low complexity). Composition is skewed to pro residues over residues Pro-768 to Pro-780 and Lys-896 to Pro-911. The segment covering Gln-944–Leu-953 has biased composition (basic residues). Residues Ala-963–Ala-975 are compositionally biased toward gly residues. Residues Arg-981–Pro-991 are compositionally biased toward basic and acidic residues. A compositionally biased stretch (low complexity) spans Arg-1005–Ala-1017. 2 stretches are compositionally biased toward basic residues: residues Ser-1025–Arg-1042 and Lys-1058–Gly-1070. Basic and acidic residues predominate over residues Pro-1082–Asp-1093. Residues Phe-1094–Gln-1103 are compositionally biased toward acidic residues. Residues Lys-1120 to Lys-1137 are compositionally biased toward basic and acidic residues. The segment covering Pro-1158–Ser-1177 has biased composition (low complexity). Basic and acidic residues predominate over residues Glu-1213–Glu-1229. 2 stretches are compositionally biased toward polar residues: residues Pro-1278–His-1290 and Asn-1333–Ser-1350. A compositionally biased stretch (basic and acidic residues) spans Arg-1577–Gly-1595. Composition is skewed to polar residues over residues Lys-1991 to Asn-2005 and Asn-2014 to Thr-2024. Basic and acidic residues predominate over residues Asp-2243 to Trp-2262. Positions Thr-2409–Gln-2435 are enriched in polar residues. The C2H2-type 1 zinc finger occupies Val-2472–His-2498. The span at Ser-2488–His-2498 shows a compositional bias: basic residues. Residues Ser-2506–Gln-2521 show a composition bias toward low complexity. Basic and acidic residues predominate over residues Ser-2534 to Pro-2546. Residues Pro-2565 to His-2574 are compositionally biased toward low complexity. A compositionally biased stretch (basic and acidic residues) spans Pro-2592–Ser-2631. Basic residues predominate over residues Asn-2632 to Arg-2642. A compositionally biased stretch (low complexity) spans Pro-2664–Ser-2676. Residues Asp-2777–Glu-2787 show a composition bias toward basic and acidic residues. Residues Thr-2805–Ser-2816 are compositionally biased toward low complexity. A compositionally biased stretch (basic residues) spans Leu-2869–Gly-2879. Low complexity predominate over residues Ala-3095 to Gly-3105. The C2H2-type 2 zinc finger occupies Tyr-3115–His-3137. The segment at Thr-3232–Leu-3322 is disordered. Basic and acidic residues predominate over residues Gly-3260–Lys-3272. Positions Pro-3302 to Asp-3314 are enriched in pro residues. 2 consecutive C2H2-type zinc fingers follow at residues Arg-3337 to His-3359 and Tyr-3365 to His-3388. The segment at Phe-3418–Arg-3442 adopts a C2H2-type 5; degenerate zinc-finger fold. Disordered stretches follow at residues Phe-3448–Ser-3501, Ser-3518–Pro-3559, and Glu-3576–Ala-3925. The span at Pro-3584–Pro-3602 shows a compositional bias: low complexity. Basic and acidic residues predominate over residues Cys-3633–Ser-3651. 2 stretches are compositionally biased toward low complexity: residues Pro-3728–Gly-3741 and Gln-3749–Ser-3759. Composition is skewed to basic and acidic residues over residues Glu-3876 to Gly-3892 and Glu-3915 to Ala-3925.

This sequence belongs to the krueppel C2H2-type zinc-finger protein family. As to expression, detected in cornea, sclera, skin fibroblasts and striated muscle.

The protein resides in the nucleus. Functionally, may be involved in transcriptional regulation. The protein is Zinc finger protein 469 (ZNF469) of Homo sapiens (Human).